We begin with the raw amino-acid sequence, 240 residues long: Ribonuclease HII (240 aa).

Residues Gly-21–Val-210 form the RNase H type-2 domain. Asp-27, Glu-28, and Asp-119 together coordinate a divalent metal cation.

The protein belongs to the RNase HII family. It depends on Mn(2+) as a cofactor. Mg(2+) serves as cofactor.

The protein localises to the cytoplasm. It catalyses the reaction Endonucleolytic cleavage to 5'-phosphomonoester.. Its function is as follows. Endonuclease that specifically degrades the RNA of RNA-DNA hybrids. The chain is Ribonuclease HII from Paracidovorax citrulli (strain AAC00-1) (Acidovorax citrulli).